Consider the following 133-residue polypeptide: ATP synthase epsilon chain (133 aa).

The segment at Val-103–Lys-133 is disordered.

It belongs to the ATPase epsilon chain family. As to quaternary structure, F-type ATPases have 2 components, CF(1) - the catalytic core - and CF(0) - the membrane proton channel. CF(1) has five subunits: alpha(3), beta(3), gamma(1), delta(1), epsilon(1). CF(0) has three main subunits: a, b and c.

It localises to the cellular thylakoid membrane. Its function is as follows. Produces ATP from ADP in the presence of a proton gradient across the membrane. This chain is ATP synthase epsilon chain, found in Prochlorococcus marinus (strain MIT 9313).